The primary structure comprises 324 residues: FCS-Like Zinc finger 11 (324 aa).

The segment at 266 to 309 (NFLGICNFCNKKLGGGDDIYMYREKSFCSEECRSEEMMIDEEDL) adopts an FLZ-type zinc-finger fold.

Belongs to the FLZ family. In terms of assembly, interacts with KIN10 and KIN11 via its FLZ-type zinc finger domain. Forms heterodimer with FLZ2 in vitro.

It is found in the cytoplasm. It localises to the nucleus. May act as an adapter to facilitate the interaction of SnRK1 complex with effector proteins, conferring tissue- and stimulus-type specific differences in the SnRK1 regulation pathway. The chain is FCS-Like Zinc finger 11 from Arabidopsis thaliana (Mouse-ear cress).